Consider the following 202-residue polypeptide: Small ribosomal subunit protein uS4c (202 aa).

Over residues 1-13 (MSRYRGPRMKMIR) the composition is skewed to basic residues. The segment at 1 to 41 (MSRYRGPRMKMIRRPGTLPGLTSKTPGTKVGSSDRSTSSKK) is disordered. A compositionally biased stretch (low complexity) spans 29-41 (KVGSSDRSTSSKK). The S4 RNA-binding domain occupies 90–153 (MRLDNTIFRL…KCRLVDRRDM (64 aa)).

This sequence belongs to the universal ribosomal protein uS4 family. Part of the 30S ribosomal subunit. Contacts protein S5. The interaction surface between S4 and S5 is involved in control of translational fidelity.

Its subcellular location is the plastid. Functionally, one of the primary rRNA binding proteins, it binds directly to 16S rRNA where it nucleates assembly of the body of the 30S subunit. Its function is as follows. With S5 and S12 plays an important role in translational accuracy. The chain is Small ribosomal subunit protein uS4c (rps4) from Aneura mirabilis (Parasitic liverwort).